Here is a 240-residue protein sequence, read N- to C-terminus: Uridylate cyclase (240 aa).

A Guanylate cyclase domain is found at 45 to 180 (TYLYADMANS…RAPNLAAKLS (136 aa)). An a ribonucleoside 5'-triphosphate-binding site is contributed by Y48. Mn(2+) contacts are provided by D50 and D94. R95 is an a ribonucleoside 5'-triphosphate binding site.

It belongs to the adenylyl cyclase class-4/guanylyl cyclase family. Pyrimidine cyclase subfamily. In terms of assembly, homodimer. Requires Mn(2+) as cofactor.

It is found in the cytoplasm. It catalyses the reaction UTP = 3',5'-cyclic UMP + diphosphate. Its function is as follows. Pycsar (pyrimidine cyclase system for antiphage resistance) provides immunity against bacteriophage. The pyrimidine cyclase (PycC) synthesizes cyclic nucleotides in response to infection; these serve as specific second messenger signals. The signals activate the adjacent effector, leading to bacterial cell death and abortive phage infection. A clade B Pycsar system. Functionally, the pyrimidine cyclase gene of a two-gene Pycsar system, weakly generates cyclic UMP (cUMP) from UTP, has little to no activity on ATP, CTP or GTP. Expression of this and adjacent effector RsmPycTM (AC A0A1V0HUU2) probably confers resistance to bacteriophage. The genes are probably only expressed in response to bacteriophage infection. In Rhodovulum sp. (strain MB263), this protein is Uridylate cyclase.